We begin with the raw amino-acid sequence, 105 residues long: Urease subunit beta (105 aa).

Belongs to the urease beta subunit family. In terms of assembly, heterotrimer of UreA (gamma), UreB (beta) and UreC (alpha) subunits. Three heterotrimers associate to form the active enzyme.

It is found in the cytoplasm. It catalyses the reaction urea + 2 H2O + H(+) = hydrogencarbonate + 2 NH4(+). It participates in nitrogen metabolism; urea degradation; CO(2) and NH(3) from urea (urease route): step 1/1. This Marinomonas sp. (strain MWYL1) protein is Urease subunit beta.